A 590-amino-acid chain; its full sequence is Aspartate--tRNA(Asp/Asn) ligase (590 aa).

Glu175 contacts L-aspartate. The segment at 199–202 (QQYK) is aspartate. Positions 221 and 450 each coordinate L-aspartate. Residue 221–223 (RDE) participates in ATP binding. Residue Glu484 coordinates ATP. Arg491 lines the L-aspartate pocket. 536-539 (GVDR) provides a ligand contact to ATP.

This sequence belongs to the class-II aminoacyl-tRNA synthetase family. Type 1 subfamily. As to quaternary structure, homodimer.

The protein resides in the cytoplasm. The enzyme catalyses tRNA(Asx) + L-aspartate + ATP = L-aspartyl-tRNA(Asx) + AMP + diphosphate. In terms of biological role, aspartyl-tRNA synthetase with relaxed tRNA specificity since it is able to aspartylate not only its cognate tRNA(Asp) but also tRNA(Asn). Reaction proceeds in two steps: L-aspartate is first activated by ATP to form Asp-AMP and then transferred to the acceptor end of tRNA(Asp/Asn). This chain is Aspartate--tRNA(Asp/Asn) ligase, found in Nitrobacter winogradskyi (strain ATCC 25391 / DSM 10237 / CIP 104748 / NCIMB 11846 / Nb-255).